Reading from the N-terminus, the 146-residue chain is MAEIVFQGASALALDAKGRLAVPARHRDVLGALAQGRLTLTKHPVGCLLVFPRPAWEGFRDKVAALPLRAEGWKRIFLGNAMDVEIDASSRVLVSPELRQAAGLVKDVMLLGMGSHFELWDVQRYQAHEAEVMQQGLPESLGDFSF.

2 consecutive SpoVT-AbrB domains span residues 9–55 and 81–124; these read ASAL…PRPA and AMDV…DVQR.

Belongs to the MraZ family. As to quaternary structure, forms oligomers.

It localises to the cytoplasm. It is found in the nucleoid. The sequence is that of Transcriptional regulator MraZ from Methylibium petroleiphilum (strain ATCC BAA-1232 / LMG 22953 / PM1).